The primary structure comprises 747 residues: 3',5'-cyclic-AMP phosphodiesterase 4D (747 aa).

The tract at residues 1–28 (MERDTCDVLSRSKSASEETLHSCNEEED) is disordered. The span at 14–24 (SASEETLHSCN) shows a compositional bias: basic and acidic residues. S238, S240, S287, and S314 each carry phosphoserine. Positions 282–302 (EVEIPSPTQKEKEKKKRPMSQ) are disordered. The PDEase domain maps to 325–654 (VKTEQEDVLA…EWYQSTIPQS (330 aa)). Residue K326 forms a Glycyl lysine isopeptide (Lys-Gly) (interchain with G-Cter in SUMO) linkage. Catalysis depends on H401, which acts as the Proton donor. 3',5'-cyclic AMP is bound at residue H401. H401 provides a ligand contact to AMP. Residues H405, H441, D442, and D559 each coordinate Zn(2+). AMP-binding residues include D442, D559, N562, Q610, and F613. Residue D442 participates in Mg(2+) binding. D442 is a binding site for Mn(2+). 3',5'-cyclic AMP-binding residues include Q610 and F613. Residues 649 to 747 (STIPQSPSPA…CVPDDCCPDT (99 aa)) form a disordered region. Residues 701–712 (CSDSKTLCTQDS) show a composition bias toward polar residues. A compositionally biased stretch (acidic residues) spans 718–734 (PLDEQVEEEAVAEEESQ).

The protein belongs to the cyclic nucleotide phosphodiesterase family. PDE4 subfamily. As to quaternary structure, homodimer for the long isoforms. Isoforms with truncated N-termini are monomeric. Binds ARRB2. Interacts with PDE4DIP. Identified in a complex composed of RYR1, PDE4D, PKA, FKBP1A and protein phosphatase 1 (PP1). Interacts (via N-terminal region) with SHANK2 (via proline-rich region); the interaction is increased in a PKA-dependent manner. The cofactor is Zn(2+). It depends on Mg(2+) as a cofactor. Mn(2+) serves as cofactor. Post-translationally, sumoylation of long isoforms by PIAS4 augments their activation by PKA phosphorylation and represses their inhibition by ERK phosphorylation. In terms of tissue distribution, expressed in brain (at protein level). Isoform 7 is detected in heart, brain, lung, kidney and testis.

The protein localises to the cytoplasm. It is found in the membrane. It localises to the cytoskeleton. The protein resides in the microtubule organizing center. Its subcellular location is the centrosome. The protein localises to the apical cell membrane. The enzyme catalyses 3',5'-cyclic AMP + H2O = AMP + H(+). It participates in purine metabolism; 3',5'-cyclic AMP degradation; AMP from 3',5'-cyclic AMP: step 1/1. With respect to regulation, inhibited by rolipram. Activated by phosphatidic acid. In terms of biological role, hydrolyzes the second messenger cAMP, which is a key regulator of many important physiological processes. The sequence is that of 3',5'-cyclic-AMP phosphodiesterase 4D (Pde4d) from Mus musculus (Mouse).